Here is a 217-residue protein sequence, read N- to C-terminus: U exon protein (217 aa).

Disordered regions lie at residues 68-110 and 170-217; these read SKIF…TNHG and EKEA…RQGR. Residues 202 to 217 show a composition bias toward polar residues; sequence GGFQQPTGANQARQGR.

This sequence belongs to the adenoviridae U exon protein family.

It is found in the host nucleus. Its subcellular location is the host nucleoplasm. The protein localises to the host nucleolus. Functionally, might play a role in viral replication since it is associated with viral replication centers. Seems to have an effect on DBP localization. This Homo sapiens (Human) protein is U exon protein.